Reading from the N-terminus, the 328-residue chain is Formimidoylglutamase (328 aa).

Mn(2+) is bound by residues histidine 133, aspartate 159, histidine 161, aspartate 163, aspartate 253, and aspartate 255.

The protein belongs to the arginase family. The cofactor is Mn(2+).

The catalysed reaction is N-formimidoyl-L-glutamate + H2O = formamide + L-glutamate. It functions in the pathway amino-acid degradation; L-histidine degradation into L-glutamate; L-glutamate from N-formimidoyl-L-glutamate (hydrolase route): step 1/1. Catalyzes the conversion of N-formimidoyl-L-glutamate to L-glutamate and formamide. The protein is Formimidoylglutamase of Streptococcus pyogenes serotype M1.